Reading from the N-terminus, the 402-residue chain is Plasminogen activator inhibitor 1 (402 aa).

A signal peptide spans 1–23 (MRMSPVFACLALGLALIFGEGSA). N-linked (GlcNAc...) asparagine glycosylation is found at Asn-232, Asn-288, and Asn-352.

It belongs to the serpin family. Forms a heterodimer with TMPRSS7. Interacts with VTN. Binds LRP1B; binding is followed by internalization and degradation. Interacts with PPP1CB. In complex with PLAU/uPA, interacts with PLAUR/uPAR. Interacts with SORL1 and LRP1, either alone or in complex with PLAU; these interactions are abolished in the presence of LRPAP1/RAP. The ternary complex composed of PLAUR-PLAU-PAI1 also interacts with SORL1. Interacts with PLAT/tPA. Also interacts with SORL1, when complexed to PLAT/tPA. In terms of tissue distribution, vascular endothelial cells may be the primary site of synthesis of plasma PAI1.

The protein resides in the secreted. Serine protease inhibitor. Inhibits TMPRSS7. Is a primary inhibitor of tissue-type plasminogen activator (PLAT) and urokinase-type plasminogen activator (PLAU). As PLAT inhibitor, it is required for fibrinolysis down-regulation and is responsible for the controlled degradation of blood clots. As PLAU inhibitor, it is involved in the regulation of cell adhesion and spreading. Acts as a regulator of cell migration, independently of its role as protease inhibitor. It is required for stimulation of keratinocyte migration during cutaneous injury repair. It is involved in cellular and replicative senescence. Plays a role in alveolar type 2 cells senescence in the lung. Is involved in the regulation of cementogenic differentiation of periodontal ligament stem cells, and regulates odontoblast differentiation and dentin formation during odontogenesis. This chain is Plasminogen activator inhibitor 1 (SERPINE1), found in Bos taurus (Bovine).